A 138-amino-acid polypeptide reads, in one-letter code: ATP synthase epsilon chain (138 aa).

This sequence belongs to the ATPase epsilon chain family. F-type ATPases have 2 components, CF(1) - the catalytic core - and CF(0) - the membrane proton channel. CF(1) has five subunits: alpha(3), beta(3), gamma(1), delta(1), epsilon(1). CF(0) has three main subunits: a, b and c.

Its subcellular location is the cell membrane. Functionally, produces ATP from ADP in the presence of a proton gradient across the membrane. The chain is ATP synthase epsilon chain from Polynucleobacter asymbioticus (strain DSM 18221 / CIP 109841 / QLW-P1DMWA-1) (Polynucleobacter necessarius subsp. asymbioticus).